Consider the following 92-residue polypeptide: Small ribosomal subunit protein uS19 (92 aa).

It belongs to the universal ribosomal protein uS19 family.

In terms of biological role, protein S19 forms a complex with S13 that binds strongly to the 16S ribosomal RNA. This is Small ribosomal subunit protein uS19 from Acholeplasma laidlawii (strain PG-8A).